Here is a 127-residue protein sequence, read N- to C-terminus: Large ribosomal subunit protein bL12 (127 aa).

The interval 98–127 (PKPVKNGVSKEEAEEAKKQLVESGAEVEIK) is disordered. Residues 105-117 (VSKEEAEEAKKQL) show a composition bias toward basic and acidic residues.

It belongs to the bacterial ribosomal protein bL12 family. In terms of assembly, homodimer. Part of the ribosomal stalk of the 50S ribosomal subunit. Forms a multimeric L10(L12)X complex, where L10 forms an elongated spine to which 2 to 4 L12 dimers bind in a sequential fashion. Binds GTP-bound translation factors.

Functionally, forms part of the ribosomal stalk which helps the ribosome interact with GTP-bound translation factors. Is thus essential for accurate translation. This Geobacter sulfurreducens (strain ATCC 51573 / DSM 12127 / PCA) protein is Large ribosomal subunit protein bL12.